Reading from the N-terminus, the 127-residue chain is Mu-like prophage FluMu protein gp41 (127 aa).

Positions 107-127 (VSRGRLDTADQETGKDLSAVS) are disordered. The span at 110–121 (GRLDTADQETGK) shows a compositional bias: basic and acidic residues.

To phage Mu protein gp41.

This is Mu-like prophage FluMu protein gp41 from Haemophilus influenzae (strain ATCC 51907 / DSM 11121 / KW20 / Rd).